Consider the following 286-residue polypeptide: tRNA pseudouridine synthase A (286 aa).

The active-site Nucleophile is the aspartate 60. Tyrosine 132 provides a ligand contact to substrate.

This sequence belongs to the tRNA pseudouridine synthase TruA family. Homodimer.

It carries out the reaction uridine(38/39/40) in tRNA = pseudouridine(38/39/40) in tRNA. Functionally, formation of pseudouridine at positions 38, 39 and 40 in the anticodon stem and loop of transfer RNAs. This chain is tRNA pseudouridine synthase A, found in Mycobacterium leprae (strain TN).